The chain runs to 428 residues: Divergent protein kinase domain 1A (428 aa).

Topologically, residues 1–27 (MARSLCPGAWLRKPYYLQARFSYVRMK) are cytoplasmic. Residues 28–48 (YLFFSWLVVFVGSWIIYVQYS) form a helical membrane-spanning segment. Residues 49–428 (TYTELCRGKD…WKKISYTNDS (380 aa)) lie on the Lumenal side of the membrane.

It belongs to the DIPK family. Post-translationally, among the many cysteines in the lumenal domain, most are probably involved in disulfide bonds.

The protein resides in the endoplasmic reticulum membrane. In Homo sapiens (Human), this protein is Divergent protein kinase domain 1A.